The following is a 353-amino-acid chain: Quinolinate synthase (353 aa).

Positions 47 and 68 each coordinate iminosuccinate. Cys113 provides a ligand contact to [4Fe-4S] cluster. Residues 139-141 (YAN) and Ser156 contribute to the iminosuccinate site. Cys200 lines the [4Fe-4S] cluster pocket. Iminosuccinate contacts are provided by residues 226–228 (HPE) and Thr243. Cys297 contributes to the [4Fe-4S] cluster binding site.

This sequence belongs to the quinolinate synthase family. Type 1 subfamily. Requires [4Fe-4S] cluster as cofactor.

It is found in the cytoplasm. It catalyses the reaction iminosuccinate + dihydroxyacetone phosphate = quinolinate + phosphate + 2 H2O + H(+). Its pathway is cofactor biosynthesis; NAD(+) biosynthesis; quinolinate from iminoaspartate: step 1/1. In terms of biological role, catalyzes the condensation of iminoaspartate with dihydroxyacetone phosphate to form quinolinate. The protein is Quinolinate synthase of Vibrio vulnificus (strain YJ016).